Here is a 525-residue protein sequence, read N- to C-terminus: Glucose-6-phosphate isomerase (525 aa).

The active-site Proton donor is glutamate 347. Residues histidine 378 and lysine 493 contribute to the active site.

The protein belongs to the GPI family.

The protein localises to the cytoplasm. The catalysed reaction is alpha-D-glucose 6-phosphate = beta-D-fructose 6-phosphate. It participates in carbohydrate biosynthesis; gluconeogenesis. The protein operates within carbohydrate degradation; glycolysis; D-glyceraldehyde 3-phosphate and glycerone phosphate from D-glucose: step 2/4. Functionally, catalyzes the reversible isomerization of glucose-6-phosphate to fructose-6-phosphate. In Chlamydia trachomatis serovar D (strain ATCC VR-885 / DSM 19411 / UW-3/Cx), this protein is Glucose-6-phosphate isomerase.